Here is a 309-residue protein sequence, read N- to C-terminus: Glutaminase (309 aa).

Positions 64, 114, 160, 167, 191, 243, and 261 each coordinate substrate.

Belongs to the glutaminase family. Homotetramer.

The catalysed reaction is L-glutamine + H2O = L-glutamate + NH4(+). This chain is Glutaminase, found in Methylorubrum extorquens (strain CM4 / NCIMB 13688) (Methylobacterium extorquens).